The following is a 742-amino-acid chain: Ectonucleotide pyrophosphatase/phosphodiesterase 1 (742 aa).

Topologically, residues 1 to 113 are cytoplasmic; it reads MELQNDLESL…TGFHSKVPFK (113 aa). Residues 114 to 134 form a helical membrane-spanning segment; that stretch reads IIFRTLFGSLVFAIFLILMIN. The Extracellular segment spans residues 135-742; sequence IAKPHHSTRV…SIDDLVDSDT (608 aa). 2 N-linked (GlcNAc...) asparagine glycosylation sites follow: Asn161 and Asn204. Positions 168 to 545 are phosphodiesterase; that stretch reads PLTIVISLDG…VFTIGSHGYD (378 aa). Thr219 serves as the catalytic Nucleophile. 3 N-linked (GlcNAc...) asparagine glycosylation sites follow: Asn264, Asn296, and Asn403. Over residues 640–659 the composition is skewed to acidic residues; the sequence is EETEQDNVDNDNDDNDDGNT. Disordered regions lie at residues 640–670 and 686–711; these read EETE…SSSL and TLLG…TAST. Residues 691–711 are compositionally biased toward low complexity; it reads TSPSSRSSSSSSIQASATAST.

Belongs to the nucleotide pyrophosphatase/phosphodiesterase family. Post-translationally, autophosphorylated as part of the catalytic cycle of phosphodiesterase/pyrophosphatase activity. N-glycosylated.

The protein localises to the membrane. It carries out the reaction Hydrolytically removes 5'-nucleotides successively from the 3'-hydroxy termini of 3'-hydroxy-terminated oligonucleotides.. The catalysed reaction is a ribonucleoside 5'-triphosphate + H2O = a ribonucleoside 5'-phosphate + diphosphate + H(+). It catalyses the reaction a 2'-deoxyribonucleoside 5'-triphosphate + H2O = a 2'-deoxyribonucleoside 5'-phosphate + diphosphate + H(+). Its function is as follows. Mediates extracellular nucleotide derived phosphate hydrolysis along with NPP2 and PHO5. This Saccharomyces cerevisiae (strain ATCC 204508 / S288c) (Baker's yeast) protein is Ectonucleotide pyrophosphatase/phosphodiesterase 1 (NPP1).